Reading from the N-terminus, the 75-residue chain is UPF0291 protein lin1342 (75 aa).

The tract at residues 55–75 (IDPKGNDVTPHKIKQMRKNKK) is disordered. Positions 65–75 (HKIKQMRKNKK) are enriched in basic residues.

The protein belongs to the UPF0291 family.

The protein resides in the cytoplasm. In Listeria innocua serovar 6a (strain ATCC BAA-680 / CLIP 11262), this protein is UPF0291 protein lin1342.